The following is a 1058-amino-acid chain: MSSSVLSKKRKVSGPDSSLDSSWSPTYSVMFGVPPGPTNEMSKNKEMDIDESLYSRQLYVLGHEAMKHLQASSVLISGLQGLGVEIAKNIILGGVKAVTLHDQGIAQWADLSSQFCLREEDIGKNRAEISQPRLAELNSYVPVFAYTGPLIEEFLSGFQVVVLTNTPLEYQLQVGEFCHSHGIKLVVADTRGLVGQLFCDFGEEMILTDSNGEQPLSAMVSMITKENPGIVTCLEDSRHGFESGDFISFTEVQGMSELNGIGPIEIKVLGPYTFSICDTSSFSEYIRGGIVSQVKVPRKINFKPLLASLAEPEFVVTDFAKCCHPAQLHIGFQALHQFCTQHSRPPRPHNEEDAEELVTLAQSVNAQALPAVQQDCLDIDLIRKLAYVAAGDLAPMNAFFGGLAAQEVMKACSGKFMPIRQWLYFDALECLPEHRVAFMEDKCLPHQNRYDGQVAVFGSDLQEKLGKQKYFLVGAGAIGCELLKNFAMIGLGCGEDGEITVTDMDTIEKSNLNRQFLFRPWDITKLKSETAAAAVRDINPHIRIFSHQNRVGPETEHVYDDDFFQKLDGVANALDNVDARLYVDRRCVYYRKPLLESGTLGTKGNVQVVVPFLTESYSSSQDPPEKSIPICTLKNFPNAIEHTVQWARDEFEGLFKQSAENVNQYLTDPKFMERTLQLAGTQPLEVLEAIHCSLVLQRPQTWADCVTWAYQHWHTQYSHNIQQLLHNFPPAQLTSSGALFWSGPKRCPHPLTFDINNPLHLDYVMAAANLFAQTYGLGGSQDCAVVAKLLQSLPVPKFAPKSGIRIHVSEQELQSTSATTIDDSHLEELKTALPTPDKLLGFKMYPIDFEKDDDSNFHMDFIVAASNLRAENYGISPADRHKSKLIAGKIIPAIATTTSAIVGLVCLELYKVVQGHQQLESYKNSFINLALPLFSFSAPLAPECHQYYDQEWTLWDRFDVQGLQPSGEEMTLKQFLDYFKTEHKLEVIMLSQGVSMLYSVFMPASKLKERLDQPMTEIVSCVSKQKLGHHVKSLVFELCCNSDSGDDIEVPYVRYIIR.

Residues 1 to 22 are disordered; it reads MSSSVLSKKRKVSGPDSSLDSS. Residues A477, D503, R514, K527, and 575–576 each bind ATP; that span reads DN. C631 acts as the Glycyl thioester intermediate in catalysis.

This sequence belongs to the ubiquitin-activating E1 family. In terms of assembly, monomer. As to expression, expressed in testis in A spermatogonia and spermatids but not (or at very low levels) in pachytene spermatocytes. Also expressed in Y-bearing ovaries and at very low levels in adrenal gland.

It carries out the reaction ATP + ubiquitin + [E1 ubiquitin-activating enzyme]-L-cysteine = AMP + diphosphate + S-ubiquitinyl-[E1 ubiquitin-activating enzyme]-L-cysteine.. It functions in the pathway protein modification; protein ubiquitination. Functionally, activates ubiquitin by first adenylating its C-terminal glycine residue with ATP, and thereafter linking this residue to the side chain of a cysteine residue in E1, yielding a ubiquitin-E1 thioester and free AMP. The Y chromosome form could be involved in the survival and proliferation of differentiating spermatogonia. This is Ubiquitin-like modifier-activating enzyme 1 Y (Uba1y) from Mus musculus (Mouse).